The sequence spans 237 residues: Ribose-5-phosphate isomerase A (237 aa).

Substrate contacts are provided by residues 33–36, 90–93, and 103–106; these read TGST, DGAD, and KGGG. Residue E112 is the Proton acceptor of the active site. K130 contributes to the substrate binding site.

It belongs to the ribose 5-phosphate isomerase family. In terms of assembly, homodimer.

It carries out the reaction aldehydo-D-ribose 5-phosphate = D-ribulose 5-phosphate. The protein operates within carbohydrate degradation; pentose phosphate pathway; D-ribose 5-phosphate from D-ribulose 5-phosphate (non-oxidative stage): step 1/1. Catalyzes the reversible conversion of ribose-5-phosphate to ribulose 5-phosphate. This is Ribose-5-phosphate isomerase A from Gloeothece citriformis (strain PCC 7424) (Cyanothece sp. (strain PCC 7424)).